The sequence spans 407 residues: MKSILWHNLKLCAHGDPNDTIADAAIAVNGDGTIAWTGRASDVPAGYVHWPREDLRGAWVTPGLVDCHTHLVYGGQRADEFAQRLAGASYEEIAQRGGGIVSTVRATRDASEAALFEQACARLRPLLAEGVTAIEIKSGYGLELASERRMLRVARQLGERFPVSVYTTFLGAHALPPEYAGRADEYIDEVCERMLPALADEGLVDAVDVFCERIGFTLAQSERVFEAAARRGLPVKMHAEQLSNGGGSALAARYRALSADHLEYLDAAGVAAMRASGTTAVLLPGAYYFIRETKLPPIDLLRRHGVPIALATDHNPGTSPLTSLLLTMNMGCTVFKLTVQEALLGVTRHAAAALGASDRHGSLAPGRQADFAVWSVSTLAELAYWFGRPLCERVVKGGVTVFTRDAR.

Fe(3+)-binding residues include histidine 68 and histidine 70. 2 residues coordinate Zn(2+): histidine 68 and histidine 70. 4-imidazolone-5-propanoate-binding residues include arginine 77, tyrosine 140, and histidine 173. Tyrosine 140 is a binding site for N-formimidoyl-L-glutamate. A Fe(3+)-binding site is contributed by histidine 238. Histidine 238 serves as a coordination point for Zn(2+). Position 241 (glutamine 241) interacts with 4-imidazolone-5-propanoate. Fe(3+) is bound at residue aspartate 313. Aspartate 313 serves as a coordination point for Zn(2+). Positions 315 and 317 each coordinate N-formimidoyl-L-glutamate. Threonine 318 contributes to the 4-imidazolone-5-propanoate binding site.

Belongs to the metallo-dependent hydrolases superfamily. HutI family. Zn(2+) is required as a cofactor. Fe(3+) serves as cofactor.

It localises to the cytoplasm. It catalyses the reaction 4-imidazolone-5-propanoate + H2O = N-formimidoyl-L-glutamate. Its pathway is amino-acid degradation; L-histidine degradation into L-glutamate; N-formimidoyl-L-glutamate from L-histidine: step 3/3. Its function is as follows. Catalyzes the hydrolytic cleavage of the carbon-nitrogen bond in imidazolone-5-propanoate to yield N-formimidoyl-L-glutamate. It is the third step in the universal histidine degradation pathway. The sequence is that of Imidazolonepropionase from Burkholderia mallei (strain ATCC 23344).